The primary structure comprises 187 residues: Elongation factor P (187 aa).

This sequence belongs to the elongation factor P family.

Its subcellular location is the cytoplasm. The protein operates within protein biosynthesis; polypeptide chain elongation. In terms of biological role, involved in peptide bond synthesis. Stimulates efficient translation and peptide-bond synthesis on native or reconstituted 70S ribosomes in vitro. Probably functions indirectly by altering the affinity of the ribosome for aminoacyl-tRNA, thus increasing their reactivity as acceptors for peptidyl transferase. The sequence is that of Elongation factor P from Roseiflexus sp. (strain RS-1).